A 294-amino-acid polypeptide reads, in one-letter code: ATP synthase gamma chain (294 aa).

It belongs to the ATPase gamma chain family. As to quaternary structure, F-type ATPases have 2 components, CF(1) - the catalytic core - and CF(0) - the membrane proton channel. CF(1) has five subunits: alpha(3), beta(3), gamma(1), delta(1), epsilon(1). CF(0) has three main subunits: a, b and c.

The protein localises to the cell inner membrane. In terms of biological role, produces ATP from ADP in the presence of a proton gradient across the membrane. The gamma chain is believed to be important in regulating ATPase activity and the flow of protons through the CF(0) complex. The sequence is that of ATP synthase gamma chain from Paramagnetospirillum magneticum (strain ATCC 700264 / AMB-1) (Magnetospirillum magneticum).